Here is a 312-residue protein sequence, read N- to C-terminus: Apolipoprotein E (312 aa).

An N-terminal signal peptide occupies residues 1–18 (MKALWAVLLVTLLAGCLA). 8 tandem repeats follow at residues 72 to 93 (VLME…EQLG), 94 to 115 (PVAE…ARLG), 116 to 137 (ADME…TMLG), 138 to 159 (QSTE…KRLM), 160 to 181 (RDAE…EGAE), 182 to 203 (RGVS…QRTA), 204 to 225 (NLGA…DRIR), and 226 to 247 (GRLE…EHME). Positions 72 to 247 (VLMEDTMTEV…RLEEVREHME (176 aa)) are 8 X 22 AA approximate tandem repeats. The residue at position 135 (M135) is a Methionine sulfoxide. Residue S139 is modified to Phosphoserine. Residues 150–160 (HLRKMRKRLMR) are LDL and other lipoprotein receptors binding. Residue 154–157 (MRKR) coordinates heparin. Residues 202-282 (TANLGAGAAQ…GWFEPIVEDM (81 aa)) are lipid-binding and lipoprotein association. Residue 221 to 228 (GDRIRGRL) participates in heparin binding. The homooligomerization stretch occupies residues 258-312 (QQIRLQAEIFQARLKGWFEPIVEDMHRQWANLMEKIQASVATNPIISTPMPQENQ). The segment at 270–282 (RLKGWFEPIVEDM) is specificity for association with VLDL.

The protein belongs to the apolipoprotein A1/A4/E family. As to quaternary structure, homotetramer. May interact with ABCA1; functionally associated with ABCA1 in the biogenesis of HDLs. May interact with APP/A4 amyloid-beta peptide; the interaction is extremely stable in vitro but its physiological significance is unclear. May interact with MAPT. May interact with MAP2. In the cerebrospinal fluid, interacts with secreted SORL1. Interacts with PMEL; this allows the loading of PMEL luminal fragment on ILVs to induce fibril nucleation. Post-translationally, APOE exists as multiple glycosylated and sialylated glycoforms within cells and in plasma. The extent of glycosylation and sialylation are tissue and context specific. In terms of processing, glycated in plasma VLDL. Phosphorylated by FAM20C in the extracellular medium.

It localises to the secreted. Its subcellular location is the extracellular space. It is found in the extracellular matrix. The protein localises to the extracellular vesicle. The protein resides in the endosome. It localises to the multivesicular body. In terms of biological role, APOE is an apolipoprotein, a protein associating with lipid particles, that mainly functions in lipoprotein-mediated lipid transport between organs via the plasma and interstitial fluids. APOE is a core component of plasma lipoproteins and is involved in their production, conversion and clearance. Apolipoproteins are amphipathic molecules that interact both with lipids of the lipoprotein particle core and the aqueous environment of the plasma. As such, APOE associates with chylomicrons, chylomicron remnants, very low density lipoproteins (VLDL) and intermediate density lipoproteins (IDL) but shows a preferential binding to high-density lipoproteins (HDL). It also binds a wide range of cellular receptors including the LDL receptor/LDLR, the LDL receptor-related proteins LRP1, LRP2 and LRP8 and the very low-density lipoprotein receptor/VLDLR that mediate the cellular uptake of the APOE-containing lipoprotein particles. Finally, APOE also has a heparin-binding activity and binds heparan-sulfate proteoglycans on the surface of cells, a property that supports the capture and the receptor-mediated uptake of APOE-containing lipoproteins by cells. A main function of APOE is to mediate lipoprotein clearance through the uptake of chylomicrons, VLDLs, and HDLs by hepatocytes. APOE is also involved in the biosynthesis by the liver of VLDLs as well as their uptake by peripheral tissues ensuring the delivery of triglycerides and energy storage in muscle, heart and adipose tissues. By participating in the lipoprotein-mediated distribution of lipids among tissues, APOE plays a critical role in plasma and tissues lipid homeostasis. APOE is also involved in two steps of reverse cholesterol transport, the HDLs-mediated transport of cholesterol from peripheral tissues to the liver, and thereby plays an important role in cholesterol homeostasis. First, it is functionally associated with ABCA1 in the biogenesis of HDLs in tissues. Second, it is enriched in circulating HDLs and mediates their uptake by hepatocytes. APOE also plays an important role in lipid transport in the central nervous system, regulating neuron survival and sprouting. The sequence is that of Apolipoprotein E (Apoe) from Mus pahari (Gairdner's shrew-mouse).